A 42-amino-acid polypeptide reads, in one-letter code: Protein YmiD (42 aa).

This Escherichia coli (strain K12) protein is Protein YmiD.